The following is a 60-amino-acid chain: Large ribosomal subunit protein bL32 (60 aa).

The span at 1–16 (MAVPRRKTSPSRRGMR) shows a compositional bias: basic residues. Positions 1-60 (MAVPRRKTSPSRRGMRRSADAIKKPTYVEDKDSGELRRPHHLDLKTGMYKGRQVLKKKES) are disordered. Basic and acidic residues predominate over residues 17-44 (RSADAIKKPTYVEDKDSGELRRPHHLDL).

Belongs to the bacterial ribosomal protein bL32 family.

The polypeptide is Large ribosomal subunit protein bL32 (Bradyrhizobium diazoefficiens (strain JCM 10833 / BCRC 13528 / IAM 13628 / NBRC 14792 / USDA 110)).